The chain runs to 77 residues: MSKAGAPDLKKYLDRQVFVQLNGSRKVYGVLRGYDIFLNIVLEDSIEEKVDGEKVKIGSVAIRGNSVIMIETLDKMT.

Residues 4–76 (AGAPDLKKYL…VIMIETLDKM (73 aa)) form the Sm domain.

The protein belongs to the snRNP Sm proteins family. Belongs to the 40S cdc5-associated complex (or cwf complex), a spliceosome sub-complex reminiscent of a late-stage spliceosome composed of the U2, U5 and U6 snRNAs and at least brr2, cdc5, cwf2/prp3, cwf3/syf1, cwf4/syf3, cwf5/ecm2, spp42/cwf6, cwf7/spf27, cwf8, cwf9, cwf10, cwf11, cwf12, prp45/cwf13, cwf14, cwf15, cwf16, cwf17, cwf18, cwf19, cwf20, cwf21, cwf22, cwf23, cwf24, cwf25, cwf26, cyp7/cwf27, cwf28, cwf29/ist3, lea1, msl1, prp5/cwf1, prp10, prp12/sap130, prp17, prp22, sap61, sap62, sap114, sap145, slu7, smb1, smd1, smd3, smf1, smg1 and syf2.

It is found in the nucleus. The protein resides in the cytoplasm. In terms of biological role, plays a role in pre-mRNA splicing as a core component of the spliceosomal U1, U2, U4 and U5 small nuclear ribonucleoproteins (snRNPs), the building blocks of the spliceosome. The chain is Small nuclear ribonucleoprotein G (smg1) from Schizosaccharomyces pombe (strain 972 / ATCC 24843) (Fission yeast).